The chain runs to 473 residues: Argininosuccinate lyase (473 aa).

At Ala-2 the chain carries N-acetylalanine. Lys-7 carries the post-translational modification N6-acetyllysine. Ser-27 provides a ligand contact to 2-(N(omega)-L-arginino)succinate. Lys-69 carries the post-translational modification N6-acetyllysine. 2-(N(omega)-L-arginino)succinate-binding residues include Asn-114 and Thr-159. His-160 (proton acceptor) is an active-site residue. Ser-281 serves as the catalytic Proton donor. Lys-288 bears the N6-acetyllysine mark. 2-(N(omega)-L-arginino)succinate-binding residues include Asn-289, Tyr-321, Gln-326, and Lys-329.

Belongs to the lyase 1 family. Argininosuccinate lyase subfamily. In terms of assembly, homotetramer. Forms tissue-specific complexes with ASS1, SLC7A1, HSP90AA1 and nitric oxide synthase NOS1, NOS2 or NOS3; the complex maintenance is independent of ASL catalytic function. In terms of processing, acetylation modifies enzyme activity in response to alterations of extracellular nutrient availability. Acetylation increased with trichostin A (TSA) or with nicotinamide (NAM). Glucose increases acetylation by about a factor of 3 with decreasing enzyme activity. Acetylation on Lys-288 is decreased on the addition of extra amino acids resulting in activation of enzyme activity.

The enzyme catalyses 2-(N(omega)-L-arginino)succinate = fumarate + L-arginine. It functions in the pathway amino-acid biosynthesis; L-arginine biosynthesis; L-arginine from L-ornithine and carbamoyl phosphate: step 3/3. The protein operates within nitrogen metabolism; urea cycle; L-arginine and fumarate from (N(omega)-L-arginino)succinate: step 1/1. With respect to regulation, enzyme activity is regulated by acetylation. In terms of biological role, catalyzes the reversible cleavage of L-argininosuccinate to fumarate and L-arginine, an intermediate step reaction in the urea cycle mostly providing for hepatic nitrogen detoxification into excretable urea as well as de novo L-arginine synthesis in nonhepatic tissues. Essential regulator of intracellular and extracellular L-arginine pools. As part of citrulline-nitric oxide cycle, forms tissue-specific multiprotein complexes with argininosuccinate synthase ASS1, transport protein SLC7A1 and nitric oxide synthase NOS1, NOS2 or NOS3, allowing for cell-autonomous L-arginine synthesis while channeling extracellular L-arginine to nitric oxide synthesis pathway. This chain is Argininosuccinate lyase (ASL), found in Bos taurus (Bovine).